We begin with the raw amino-acid sequence, 340 residues long: ATPase GET3 (340 aa).

35 to 42 (KGGVGKTT) serves as a coordination point for ATP. Residue Asp-64 is part of the active site. The ATP site is built by Glu-245 and Asn-272. 2 residues coordinate Zn(2+): Cys-283 and Cys-286.

It belongs to the arsA ATPase family. Homodimer.

It localises to the cytoplasm. Its subcellular location is the endoplasmic reticulum. Its function is as follows. ATPase required for the post-translational delivery of tail-anchored (TA) proteins to the endoplasmic reticulum. Recognizes and selectively binds the transmembrane domain of TA proteins in the cytosol. This complex then targets to the endoplasmic reticulum by membrane-bound receptors, where the tail-anchored protein is released for insertion. This process is regulated by ATP binding and hydrolysis. ATP binding drives the homodimer towards the closed dimer state, facilitating recognition of newly synthesized TA membrane proteins. ATP hydrolysis is required for insertion. Subsequently, the homodimer reverts towards the open dimer state, lowering its affinity for the membrane-bound receptor, and returning it to the cytosol to initiate a new round of targeting. The protein is ATPase GET3 of Chaetomium globosum (strain ATCC 6205 / CBS 148.51 / DSM 1962 / NBRC 6347 / NRRL 1970) (Soil fungus).